The following is a 367-amino-acid chain: Popeye domain-containing protein 2 (367 aa).

N-linked (GlcNAc...) asparagine glycosylation is present at Asn4. Helical transmembrane passes span Phe36 to Ile56 and Ile77 to Tyr97. Disordered stretches follow at residues Pro273–Ala292 and Ala312–Leu367. Positions Gly278–Leu290 are enriched in acidic residues. The segment covering Pro344–Gln356 has biased composition (polar residues). Asn347 is a glycosylation site (N-linked (GlcNAc...) asparagine). Position 364 is a phosphothreonine (Thr364).

This sequence belongs to the popeye family. In terms of tissue distribution, expressed in the developing and adult heart, with high expression levels in the sinus and atrioventricular nodes. Also expressed in the bladder and skeletal muscle.

It is found in the membrane. It localises to the cell membrane. The protein resides in the sarcolemma. In terms of biological role, important for the maintenance of cardiac function. Plays a regulatory function in heart rate dynamics mediated, at least in part, through cAMP-binding and, probably, by increasing cell surface expression of the potassium channel KCNK2 and enhancing current density. The polypeptide is Popeye domain-containing protein 2 (Popdc2) (Mus musculus (Mouse)).